Reading from the N-terminus, the 415-residue chain is Putative ankyrin repeat protein FPV034 (415 aa).

10 ANK repeats span residues 12–41, 43–72, 76–105, 107–135, 139–168, 170–200, 203–232, 237–266, 270–299, and 303–332; these read ICIKLLEQAIELKDYIVVRMILNQQENINT, KHFNMLRKAVLNHDHNLVNIFIDKNFNINI, VGYTLLRYAVEVDDVNIAKILLDAGSIINK, DYRLLHSAITHENKKMIELLCLHGININV, KGYTALYYTICNNNYDMVCFLLEKNADISI, NKYSMLHFLSTSNKYHNVMAVLLDKGIDVNI, HVKAPIHVAVERNNIYGTMLLINRNADVNI, GGRTSLHLAIKERNYEAAFVLINNGANVDS, VGNTPIFIAASLQDVRFMKLLLDNGADINV, and FGETPVNMVITGGSKEVTQYTVSYLISLKV.

The sequence is that of Putative ankyrin repeat protein FPV034 (ANK2) from Fowlpox virus (strain NVSL) (FPV).